The following is a 381-amino-acid chain: Alcohol dehydrogenase class-3 (381 aa).

C49 serves as a coordination point for Zn(2+). Position 50 (H50) interacts with NAD(+). The an alcohol site is built by T51 and H71. Zn(2+) contacts are provided by H71, E72, C101, C104, C107, C115, and C179. NAD(+) contacts are provided by residues 204–209 (GLGTVG), D228, K233, I274, 297–299 (VGV), 322–324 (TAF), and R374.

This sequence belongs to the zinc-containing alcohol dehydrogenase family. Class-III subfamily. In terms of assembly, homodimer. Zn(2+) is required as a cofactor.

It is found in the cytoplasm. It carries out the reaction a primary alcohol + NAD(+) = an aldehyde + NADH + H(+). The catalysed reaction is a secondary alcohol + NAD(+) = a ketone + NADH + H(+). The enzyme catalyses S-(hydroxymethyl)glutathione + NADP(+) = S-formylglutathione + NADPH + H(+). It catalyses the reaction S-(hydroxymethyl)glutathione + NAD(+) = S-formylglutathione + NADH + H(+). This is Alcohol dehydrogenase class-3 from Oryza sativa subsp. japonica (Rice).